Consider the following 445-residue polypeptide: 23S rRNA (uracil(1939)-C(5))-methyltransferase RlmD (445 aa).

The TRAM domain maps to 6-64 (RRLPREPFEIAITGLSHEGRGIAHHDERTLFVHGALPGERVRAVYTKRRRSVAEARVVE). Residues C77, C83, C86, and C165 each contribute to the [4Fe-4S] cluster site. S-adenosyl-L-methionine-binding residues include Q274, F303, N308, E324, D351, and D372. C398 acts as the Nucleophile in catalysis.

The protein belongs to the class I-like SAM-binding methyltransferase superfamily. RNA M5U methyltransferase family. RlmD subfamily.

The catalysed reaction is uridine(1939) in 23S rRNA + S-adenosyl-L-methionine = 5-methyluridine(1939) in 23S rRNA + S-adenosyl-L-homocysteine + H(+). In terms of biological role, catalyzes the formation of 5-methyl-uridine at position 1939 (m5U1939) in 23S rRNA. This Alkalilimnicola ehrlichii (strain ATCC BAA-1101 / DSM 17681 / MLHE-1) protein is 23S rRNA (uracil(1939)-C(5))-methyltransferase RlmD.